A 224-amino-acid chain; its full sequence is PKHD-type hydroxylase SO_3913 (224 aa).

The 99-residue stretch at 78-176 folds into the Fe2OG dioxygenase domain; the sequence is QFYPPLFNRY…RTSAFMWLQS (99 aa). 3 residues coordinate Fe cation: histidine 96, aspartate 98, and histidine 157. Arginine 167 contacts 2-oxoglutarate.

Fe(2+) is required as a cofactor. Requires L-ascorbate as cofactor.

The chain is PKHD-type hydroxylase SO_3913 from Shewanella oneidensis (strain ATCC 700550 / JCM 31522 / CIP 106686 / LMG 19005 / NCIMB 14063 / MR-1).